We begin with the raw amino-acid sequence, 308 residues long: Ribosomal RNA small subunit methyltransferase H (308 aa).

Residues 33–35 (GGH), Asp-52, Phe-78, Asp-99, and Gln-106 each bind S-adenosyl-L-methionine. The segment at 289–308 (EEIETNSRSRSAKLRVAEKL) is disordered.

Belongs to the methyltransferase superfamily. RsmH family.

It is found in the cytoplasm. It catalyses the reaction cytidine(1402) in 16S rRNA + S-adenosyl-L-methionine = N(4)-methylcytidine(1402) in 16S rRNA + S-adenosyl-L-homocysteine + H(+). Specifically methylates the N4 position of cytidine in position 1402 (C1402) of 16S rRNA. This Thermoanaerobacter sp. (strain X514) protein is Ribosomal RNA small subunit methyltransferase H.